A 148-amino-acid polypeptide reads, in one-letter code: Large ribosomal subunit protein eL19 (148 aa).

Positions 52–76 (KPKKGISSYRSKKIAQQKKKGRRRG) are enriched in basic residues. The disordered stretch occupies residues 52–95 (KPKKGISSYRSKKIAQQKKKGRRRGPGSIKGAKGARRPKKDEWM).

It belongs to the eukaryotic ribosomal protein eL19 family. Part of the 50S ribosomal subunit.

Its function is as follows. Binds to the 23S rRNA. The protein is Large ribosomal subunit protein eL19 of Methanothermobacter thermautotrophicus (strain ATCC 29096 / DSM 1053 / JCM 10044 / NBRC 100330 / Delta H) (Methanobacterium thermoautotrophicum).